Consider the following 488-residue polypeptide: UDP-N-acetylmuramate--L-alanine ligase (488 aa).

ATP is bound at residue 129–135 (GSHGKTT).

Belongs to the MurCDEF family.

The protein localises to the cytoplasm. The enzyme catalyses UDP-N-acetyl-alpha-D-muramate + L-alanine + ATP = UDP-N-acetyl-alpha-D-muramoyl-L-alanine + ADP + phosphate + H(+). It participates in cell wall biogenesis; peptidoglycan biosynthesis. Cell wall formation. The protein is UDP-N-acetylmuramate--L-alanine ligase of Prochlorococcus marinus (strain MIT 9303).